The sequence spans 435 residues: MNSQTSVVGVHYRVGRKIGEGSFGVIFDGMNLLNNQLIAIKFEPKKSEAPQLRDEYRTYKLLVGNAGIPNVYYFGQEGLHNILVIDLLGPSLEDLFEWCGRRFSVKTVAMTAKQMLSRVQTIHEKNLVYRDIKPDNFLIGRPSSRNANMVYMVDFGMAKYYRDPKTKQHIPYSERKSLSGTARYMSINTHLGREQSRRDDLESLGHVFMYFLRGSLPWQGLKAANNKHKYEKISEKKQSTSISELCAGFPNEFSKYMTYVRSLEFDEEPDYAFLQELFDDVLRANGDTNDGVYDWMLLNDGKGWESSSSHFSVVAMKRRKNYLGLNVVQNDDSRKKNSTLQTQNMRFKSSYGVRGPRNYSSFDALPSKNAPLVRQEQSASKKTIYAHSSRGYDRVRPMYVSQPSNNAVGVNHPNDNSDSEAKGGFFDMICCRCFS.

One can recognise a Protein kinase domain in the interval 12-282 (YRVGRKIGEG…FLQELFDDVL (271 aa)). Residues 18–26 (IGEGSFGVI) and lysine 41 contribute to the ATP site. The active-site Proton acceptor is the aspartate 131. Serine 361 bears the Phosphoserine mark.

The protein belongs to the protein kinase superfamily. CK1 Ser/Thr protein kinase family. Casein kinase I subfamily.

It localises to the cytoplasm. It catalyses the reaction L-seryl-[protein] + ATP = O-phospho-L-seryl-[protein] + ADP + H(+). The catalysed reaction is L-threonyl-[protein] + ATP = O-phospho-L-threonyl-[protein] + ADP + H(+). Casein kinases are operationally defined by their preferential utilization of acidic proteins such as caseins as substrates. May contribute to the regulation of morphology. This Schizosaccharomyces pombe (strain 972 / ATCC 24843) (Fission yeast) protein is Casein kinase I homolog 2 (cki2).